A 79-amino-acid polypeptide reads, in one-letter code: WAP four-disulfide core domain protein 10A (79 aa).

A signal peptide spans 1–21; that stretch reads MAPQTLLPVLVLCVLLLQAQG. Residues 34–79 form the WAP domain; sequence LSPEIKVCQQQPKLYLCKHLCESHRDCQANNICCSTYCGNVCMSIL. 4 cysteine pairs are disulfide-bonded: cysteine 41–cysteine 67, cysteine 50–cysteine 71, cysteine 54–cysteine 66, and cysteine 60–cysteine 75.

The protein localises to the secreted. This Homo sapiens (Human) protein is WAP four-disulfide core domain protein 10A (WFDC10A).